We begin with the raw amino-acid sequence, 455 residues long: Argininosuccinate synthase (455 aa).

Residues 17-25 (AFSGGLDTS) and alanine 43 contribute to the ATP site. L-citrulline is bound at residue tyrosine 99. 2 residues coordinate ATP: glycine 129 and threonine 131. Threonine 131, asparagine 135, and aspartate 136 together coordinate L-aspartate. Asparagine 135 is an L-citrulline binding site. An ATP-binding site is contributed by aspartate 136. L-citrulline contacts are provided by arginine 139 and serine 192. Aspartate 194 is an ATP binding site. 3 residues coordinate L-citrulline: threonine 201, glutamate 203, and glutamate 280. Positions 434–448 (TGLPQVDNNNLSSGR) are enriched in polar residues. The disordered stretch occupies residues 434 to 455 (TGLPQVDNNNLSSGRGLQDKRQ).

This sequence belongs to the argininosuccinate synthase family. Type 2 subfamily. As to quaternary structure, homotetramer.

The protein resides in the cytoplasm. The catalysed reaction is L-citrulline + L-aspartate + ATP = 2-(N(omega)-L-arginino)succinate + AMP + diphosphate + H(+). It participates in amino-acid biosynthesis; L-arginine biosynthesis; L-arginine from L-ornithine and carbamoyl phosphate: step 2/3. The polypeptide is Argininosuccinate synthase (argG) (Yersinia pestis).